The chain runs to 172 residues: Small ribosomal subunit protein uS5 (172 aa).

The 64-residue stretch at 17–80 (LREKMIAVNR…DEARRKMIKV (64 aa)) folds into the S5 DRBM domain.

It belongs to the universal ribosomal protein uS5 family. As to quaternary structure, part of the 30S ribosomal subunit. Contacts proteins S4 and S8.

With S4 and S12 plays an important role in translational accuracy. Functionally, located at the back of the 30S subunit body where it stabilizes the conformation of the head with respect to the body. In Polynucleobacter asymbioticus (strain DSM 18221 / CIP 109841 / QLW-P1DMWA-1) (Polynucleobacter necessarius subsp. asymbioticus), this protein is Small ribosomal subunit protein uS5.